Consider the following 376-residue polypeptide: Putative glutamate--cysteine ligase 2 (376 aa).

The protein belongs to the glutamate--cysteine ligase type 2 family. YbdK subfamily.

The enzyme catalyses L-cysteine + L-glutamate + ATP = gamma-L-glutamyl-L-cysteine + ADP + phosphate + H(+). Its function is as follows. ATP-dependent carboxylate-amine ligase which exhibits weak glutamate--cysteine ligase activity. This Mycolicibacterium paratuberculosis (strain ATCC BAA-968 / K-10) (Mycobacterium paratuberculosis) protein is Putative glutamate--cysteine ligase 2.